Consider the following 348-residue polypeptide: Flavonol synthase/flavanone 3-hydroxylase (348 aa).

Residues 209-309 (EIVYLLKINY…RMSWPVFLEP (101 aa)) enclose the Fe2OG dioxygenase domain. The Fe cation site is built by His234, Asp236, and His290.

The protein belongs to the iron/ascorbate-dependent oxidoreductase family. It depends on L-ascorbate as a cofactor. The cofactor is Fe cation.

The protein localises to the cytoplasm. It catalyses the reaction a (2R,3R)-dihydroflavonol + 2-oxoglutarate + O2 = a flavonol + succinate + CO2 + H2O. The catalysed reaction is a (2S)-flavan-4-one + 2-oxoglutarate + O2 = a (2R,3R)-dihydroflavonol + succinate + CO2. The protein operates within secondary metabolite biosynthesis; flavonoid biosynthesis. Functionally, catalyzes the formation of flavonols from dihydroflavonols. It can act on dihydrokaempferol to produce kaempferol, on dihydroquercetin to produce quercitin and on dihydromyricetin to produce myricetin. The chain is Flavonol synthase/flavanone 3-hydroxylase (FL) from Petunia hybrida (Petunia).